The sequence spans 356 residues: UDP-N-acetylglucosamine--N-acetylmuramyl-(pentapeptide) pyrophosphoryl-undecaprenol N-acetylglucosamine transferase (356 aa).

Arg-166, Ser-196, and Gln-290 together coordinate UDP-N-acetyl-alpha-D-glucosamine.

It belongs to the glycosyltransferase 28 family. MurG subfamily.

Its subcellular location is the cell membrane. It carries out the reaction Mur2Ac(oyl-L-Ala-gamma-D-Glu-L-Lys-D-Ala-D-Ala)-di-trans,octa-cis-undecaprenyl diphosphate + UDP-N-acetyl-alpha-D-glucosamine = beta-D-GlcNAc-(1-&gt;4)-Mur2Ac(oyl-L-Ala-gamma-D-Glu-L-Lys-D-Ala-D-Ala)-di-trans,octa-cis-undecaprenyl diphosphate + UDP + H(+). It participates in cell wall biogenesis; peptidoglycan biosynthesis. Functionally, cell wall formation. Catalyzes the transfer of a GlcNAc subunit on undecaprenyl-pyrophosphoryl-MurNAc-pentapeptide (lipid intermediate I) to form undecaprenyl-pyrophosphoryl-MurNAc-(pentapeptide)GlcNAc (lipid intermediate II). This is UDP-N-acetylglucosamine--N-acetylmuramyl-(pentapeptide) pyrophosphoryl-undecaprenol N-acetylglucosamine transferase from Staphylococcus aureus (strain Mu3 / ATCC 700698).